We begin with the raw amino-acid sequence, 116 residues long: Large ribosomal subunit protein bL20 (116 aa).

This sequence belongs to the bacterial ribosomal protein bL20 family.

Its function is as follows. Binds directly to 23S ribosomal RNA and is necessary for the in vitro assembly process of the 50S ribosomal subunit. It is not involved in the protein synthesizing functions of that subunit. The chain is Large ribosomal subunit protein bL20 from Bacteroides thetaiotaomicron (strain ATCC 29148 / DSM 2079 / JCM 5827 / CCUG 10774 / NCTC 10582 / VPI-5482 / E50).